A 419-amino-acid polypeptide reads, in one-letter code: UDP-N-acetylglucosamine 1-carboxyvinyltransferase (419 aa).

Position 22-23 (lysine 22–asparagine 23) interacts with phosphoenolpyruvate. A UDP-N-acetyl-alpha-D-glucosamine-binding site is contributed by arginine 93. Cysteine 117 (proton donor) is an active-site residue. Cysteine 117 carries the post-translational modification 2-(S-cysteinyl)pyruvic acid O-phosphothioketal. UDP-N-acetyl-alpha-D-glucosamine-binding residues include aspartate 306 and isoleucine 328.

It belongs to the EPSP synthase family. MurA subfamily.

It is found in the cytoplasm. It carries out the reaction phosphoenolpyruvate + UDP-N-acetyl-alpha-D-glucosamine = UDP-N-acetyl-3-O-(1-carboxyvinyl)-alpha-D-glucosamine + phosphate. It functions in the pathway cell wall biogenesis; peptidoglycan biosynthesis. Cell wall formation. Adds enolpyruvyl to UDP-N-acetylglucosamine. This is UDP-N-acetylglucosamine 1-carboxyvinyltransferase from Ruthia magnifica subsp. Calyptogena magnifica.